A 65-amino-acid polypeptide reads, in one-letter code: uncharacterized protein (65 aa).

A helical membrane pass occupies residues 37-57 (ILAIMTSVLPVLLIYIIWIFI).

The protein resides in the cell membrane. This is an uncharacterized protein from Bacillus subtilis (strain 168).